A 91-amino-acid chain; its full sequence is Putative regulatory protein Helmi_20580 (91 aa).

The protein belongs to the RemA family.

The chain is Putative regulatory protein Helmi_20580 from Heliobacterium modesticaldum (strain ATCC 51547 / Ice1).